A 129-amino-acid polypeptide reads, in one-letter code: Profilin-4 (129 aa).

It belongs to the profilin family.

The protein resides in the cytoplasm. Its function is as follows. Involved in male fertility. Required for manchette development and acrosome biogenesis during spermiogenesis. Binds in vitro to phospholipids, including phosphatidylinositol 3-phosphate (PtdIns(3)P), phosphatidylinositol 4,5-bisphosphate (PtdIns(4,5)P2), phosphatidylinositol 4-phosphate (PtdIns(4)P) and phosphatidic acid (PA). Contrary to other profilin family members, does not bind to actin in vitro. The protein is Profilin-4 (PFN4) of Bos taurus (Bovine).